The chain runs to 163 residues: Nucleotide-binding protein RBAM_011030 (163 aa).

This sequence belongs to the YajQ family.

In terms of biological role, nucleotide-binding protein. The chain is Nucleotide-binding protein RBAM_011030 from Bacillus velezensis (strain DSM 23117 / BGSC 10A6 / LMG 26770 / FZB42) (Bacillus amyloliquefaciens subsp. plantarum).